The following is a 374-amino-acid chain: bZIP transcription factor TRAB1 (374 aa).

Residues 1-13 (MDLKDGGGSERRG) are compositionally biased toward basic and acidic residues. Disordered regions lie at residues 1 to 23 (MDLK…AGAA) and 117 to 142 (ASPG…QPTL). Positions 14–23 (AAAGAGAGAA) are enriched in low complexity. In terms of domain architecture, bZIP spans 286–349 (VERRQRRMIK…KNFFPEMQKN (64 aa)). The interval 288–307 (RRQRRMIKNRESAARSRARK) is basic motif. Residues 314 to 335 (LEAEVQKLKEQNMELQKKQEEI) are leucine-zipper.

It belongs to the bZIP family. As to quaternary structure, interacts with VP1 (via N-terminus). As to expression, expressed in roots, leaves and embryos.

Its subcellular location is the nucleus. Transcription activator that mediates abscisic acid (ABA) signaling. Binds specifically to the ABA-responsive element (ABRE) of the EMP1 and RAB16A gene promoters. The sequence is that of bZIP transcription factor TRAB1 from Oryza sativa subsp. japonica (Rice).